Reading from the N-terminus, the 931-residue chain is Protein translocase subunit SecA (931 aa).

ATP-binding positions include glutamine 87, 105–109 (GEGKT), and aspartate 523. Zn(2+) contacts are provided by cysteine 915, cysteine 917, cysteine 926, and histidine 927.

This sequence belongs to the SecA family. As to quaternary structure, monomer and homodimer. Part of the essential Sec protein translocation apparatus which comprises SecA, SecYEG and auxiliary proteins SecDF-YajC and YidC. Zn(2+) serves as cofactor.

The protein resides in the cell inner membrane. It is found in the cytoplasm. The enzyme catalyses ATP + H2O + cellular proteinSide 1 = ADP + phosphate + cellular proteinSide 2.. Part of the Sec protein translocase complex. Interacts with the SecYEG preprotein conducting channel. Has a central role in coupling the hydrolysis of ATP to the transfer of proteins into and across the cell membrane, serving both as a receptor for the preprotein-SecB complex and as an ATP-driven molecular motor driving the stepwise translocation of polypeptide chains across the membrane. The polypeptide is Protein translocase subunit SecA (Xanthobacter autotrophicus (strain ATCC BAA-1158 / Py2)).